A 400-amino-acid chain; its full sequence is Lipase member N (400 aa).

A signal peptide spans Met1–Ser19. Residues Pro81 to Gly381 enclose the AB hydrolase-1 domain. The active-site Nucleophile is Ser175. A disulfide bond links Cys249 and Cys258. N-linked (GlcNAc...) asparagine glycosylation occurs at Asn274. Residues Asp346 and His375 each act as charge relay system in the active site.

It belongs to the AB hydrolase superfamily. Lipase family. Highly expressed in the epidermis. Also detected in other tissues, although at much lower levels, including liver and kidney.

Its subcellular location is the secreted. It carries out the reaction a sterol ester + H2O = a sterol + a fatty acid + H(+). It catalyses the reaction a triacylglycerol + H2O = a 1,2-diacylglycerol + a fatty acid + H(+). The enzyme catalyses a triacylglycerol + H2O = a diacylglycerol + a fatty acid + H(+). The catalysed reaction is a cholesterol ester + H2O = cholesterol + a fatty acid + H(+). In terms of biological role, plays a highly specific role in the last step of keratinocyte differentiation. Contains two distinct domains: the alpha/beta hydrolase fold and the abhydrolase-associated lipase region, also features the consensus sequence of the active site of a genuine lipase. May have an essential function in lipid metabolism of the most differentiated epidermal layers. This chain is Lipase member N (Lipn), found in Mus musculus (Mouse).